A 242-amino-acid chain; its full sequence is Protein HTATIP2 (242 aa).

Ala2 bears the N-acetylalanine mark. The interval 2–25 (AETEALSKLREDFRMQNKSVFILG) is required for interaction with elongation factor EEF1A1. NADPH is bound by residues Ser27, Gly28, Glu29, Thr30, Arg52, Arg53, Leu92, Gly93, Tyr143, Lys147, and Arg178. Tyr143 acts as the Proton acceptor in catalysis. Residue Lys147 is part of the active site.

As to quaternary structure, monomer. Forms homodimers during oxidative stress. Interacts (via N-terminus) with elongation factor EEF1A1 (via middle-region); the interaction is direct and competes with EEF1A1 binding to guanyl-nucleotide exchange factor EEF1B2, thereby inhibiting GDP for GTP exchange and reactivation of EEF1A1. Interacts with nuclear transport receptors XPO4, IPO5/RANBP5, IPO7, IPO9 and KPNB1 as well as GCN1L1/GCN1 and LRPPRC probably through their HEAT repeats. Binds NCOA5/CIA.

The protein resides in the cytoplasm. Represses translation by preventing reactivation of elongation factor eEF1A. May also inhibit nuclear import by competing with nuclear import substrates for binding to a subset of nuclear transport receptors. Has additionally been proposed to act as a redox sensor involved in cellular oxidative stress surveillance. The chain is Protein HTATIP2 (HTATIP2) from Pan paniscus (Pygmy chimpanzee).